A 517-amino-acid polypeptide reads, in one-letter code: Bifunctional purine biosynthesis protein PurH (517 aa).

Residues 1 to 145 (MSPLALVSVS…KNHKYVSVLV (145 aa)) form the MGS-like domain.

The protein belongs to the PurH family.

It catalyses the reaction (6R)-10-formyltetrahydrofolate + 5-amino-1-(5-phospho-beta-D-ribosyl)imidazole-4-carboxamide = 5-formamido-1-(5-phospho-D-ribosyl)imidazole-4-carboxamide + (6S)-5,6,7,8-tetrahydrofolate. It carries out the reaction IMP + H2O = 5-formamido-1-(5-phospho-D-ribosyl)imidazole-4-carboxamide. It functions in the pathway purine metabolism; IMP biosynthesis via de novo pathway; 5-formamido-1-(5-phospho-D-ribosyl)imidazole-4-carboxamide from 5-amino-1-(5-phospho-D-ribosyl)imidazole-4-carboxamide (10-formyl THF route): step 1/1. The protein operates within purine metabolism; IMP biosynthesis via de novo pathway; IMP from 5-formamido-1-(5-phospho-D-ribosyl)imidazole-4-carboxamide: step 1/1. In Prochlorococcus marinus (strain MIT 9215), this protein is Bifunctional purine biosynthesis protein PurH.